The chain runs to 390 residues: Type II methyltransferase M.SacI (390 aa).

Positions 5–371 constitute an SAM-dependent MTase C5-type domain; the sequence is LPVISLFSGA…RALMEQLGYL (367 aa). Residue Cys96 is part of the active site.

The protein belongs to the class I-like SAM-binding methyltransferase superfamily. C5-methyltransferase family.

It carries out the reaction a 2'-deoxycytidine in DNA + S-adenosyl-L-methionine = a 5-methyl-2'-deoxycytidine in DNA + S-adenosyl-L-homocysteine + H(+). A beta methylase recognizes the double-stranded sequence 5'-GAGCTC-3', methylates C-4 on both strands, and protects the DNA from cleavage by the SacI endonuclease. In Streptomyces achromogenes, this protein is Type II methyltransferase M.SacI.